A 507-amino-acid chain; its full sequence is Putative UDP-glucuronosyltransferase ugt-60 (507 aa).

The signal sequence occupies residues 1-15 (MYLPIFCIFLSVVDS). N312 carries N-linked (GlcNAc...) asparagine glycosylation. Residues 379–399 (YNSFLEAAQAGIPAVLMPLFA) form a helical membrane-spanning segment.

Belongs to the UDP-glycosyltransferase family.

The protein resides in the membrane. It carries out the reaction glucuronate acceptor + UDP-alpha-D-glucuronate = acceptor beta-D-glucuronoside + UDP + H(+). This is Putative UDP-glucuronosyltransferase ugt-60 (ugt-60) from Caenorhabditis elegans.